A 215-amino-acid polypeptide reads, in one-letter code: LysM and putative peptidoglycan-binding domain-containing protein 2 (215 aa).

Residues 1-40 are disordered; it reads MADSSPALSLREGGPRAPRPSAPSPPPRSRSGSESEEAEL. A2 is modified (N-acetylalanine). Residues S5, S24, S33, and S57 each carry the phosphoserine modification. A compositionally biased stretch (pro residues) spans 17 to 28; it reads APRPSAPSPPPR. Residues 71 to 115 enclose the LysM domain; that stretch reads VEHRVRAGDTLQGIALKYGVTMEQIKRANKLFTNDCIFLKKTLNI. 2 disordered regions span residues 132 to 175 and 193 to 215; these read DSPE…EEVS and AAKKLKEESRDEESPYATSLYHS. Residues 196 to 205 are compositionally biased toward basic and acidic residues; sequence KLKEESRDEE.

This Homo sapiens (Human) protein is LysM and putative peptidoglycan-binding domain-containing protein 2 (LYSMD2).